Here is a 70-residue protein sequence, read N- to C-terminus: MKKGIHPEYYHDSVVKCACGNTFTTGSTQKELKVEICSKCHPFFTGKQKLVDAGGRVDRFLKKFNLKNEE.

Residues Cys17, Cys19, Cys37, and Cys40 each contribute to the Zn(2+) site.

The protein belongs to the bacterial ribosomal protein bL31 family. Type A subfamily. In terms of assembly, part of the 50S ribosomal subunit. The cofactor is Zn(2+).

Binds the 23S rRNA. The chain is Large ribosomal subunit protein bL31 from Clostridium kluyveri (strain NBRC 12016).